The sequence spans 325 residues: ATP synthase gamma chain (325 aa).

It belongs to the ATPase gamma chain family. F-type ATPases have 2 components, CF(1) - the catalytic core - and CF(0) - the membrane proton channel. CF(1) has five subunits: alpha(3), beta(3), gamma(1), delta(1), epsilon(1). CF(0) has three main subunits: a, b and c.

The protein resides in the cell membrane. Produces ATP from ADP in the presence of a proton gradient across the membrane. The gamma chain is believed to be important in regulating ATPase activity and the flow of protons through the CF(0) complex. The chain is ATP synthase gamma chain from Corynebacterium diphtheriae (strain ATCC 700971 / NCTC 13129 / Biotype gravis).